The primary structure comprises 546 residues: MTTRYIFVTGGVVSSLGKGIAAASLAAILEARGLNVTIMKLDPYINVDPGTMSPTQHGEVFVTEDGAETDLDLGHYERFIRTKMNRRNNFTTGRIYEEVLRKERRGDYLGATIQVIPHITNAIKEKVIAGGEGHDVAIVEIGGTVGDIESLPFLESIRQLGVELGRDRTLFMHLTLVPFLGAAGEVKTKPTQHSVKELRSIGIAPDVLICRGDRAIPANERAKISLFCNVEERAVISLKDVDSIYKIPALLRSQGLDDLVVKRFGLECREADLSEWENVIYQEANPNGEVVIGMVGKYIELPDAYKSVNEALKHAGLKNRVSVTIKYIDSQTVEAKGDEVLQGLDGILVPGGFGERGVEGKILAAKYARENELPYFGICLGMQVALIEFARNVAGMADAHSTEFNKATPFPVVGLITEWVDEEGNVEQRHEASDLGGTMRLGAQLCHLLEGSKAAQAYKGNTCVERHRHRYEVNNKYRERLEQAGLVFSGLSSDRKLVEMIELKDHPWFVAGQFHPEFTSTPRDGHPLFEGFVAAASAHQKRDLKK.

An amidoligase domain region spans residues 1 to 266; sequence MTTRYIFVTG…DDLVVKRFGL (266 aa). CTP is bound at residue serine 14. Serine 14 contacts UTP. ATP is bound by residues 15 to 20 and aspartate 72; that span reads SLGKGI. Positions 72 and 140 each coordinate Mg(2+). CTP-binding positions include 147-149, 187-192, and lysine 223; these read DIE and KTKPTQ. UTP is bound by residues 187–192 and lysine 223; that span reads KTKPTQ. 239 to 241 is a binding site for ATP; sequence KDV. Residues 291 to 542 form the Glutamine amidotransferase type-1 domain; sequence VIGMVGKYIE…VAAASAHQKR (252 aa). Glycine 352 is an L-glutamine binding site. The Nucleophile; for glutamine hydrolysis role is filled by cysteine 379. Residues 380-383, glutamate 403, and arginine 470 each bind L-glutamine; that span reads LGMQ. Residues histidine 515 and glutamate 517 contribute to the active site.

Belongs to the CTP synthase family. Homotetramer.

It carries out the reaction UTP + L-glutamine + ATP + H2O = CTP + L-glutamate + ADP + phosphate + 2 H(+). The catalysed reaction is L-glutamine + H2O = L-glutamate + NH4(+). It catalyses the reaction UTP + NH4(+) + ATP = CTP + ADP + phosphate + 2 H(+). The protein operates within pyrimidine metabolism; CTP biosynthesis via de novo pathway; CTP from UDP: step 2/2. Allosterically activated by GTP, when glutamine is the substrate; GTP has no effect on the reaction when ammonia is the substrate. The allosteric effector GTP functions by stabilizing the protein conformation that binds the tetrahedral intermediate(s) formed during glutamine hydrolysis. Inhibited by the product CTP, via allosteric rather than competitive inhibition. Catalyzes the ATP-dependent amination of UTP to CTP with either L-glutamine or ammonia as the source of nitrogen. Regulates intracellular CTP levels through interactions with the four ribonucleotide triphosphates. The sequence is that of CTP synthase from Shewanella sp. (strain MR-4).